A 217-amino-acid polypeptide reads, in one-letter code: UPF0502 protein VFMJ11_A0613 (217 aa).

This sequence belongs to the UPF0502 family.

This is UPF0502 protein VFMJ11_A0613 from Aliivibrio fischeri (strain MJ11) (Vibrio fischeri).